The following is a 473-amino-acid chain: uncharacterized protein (473 aa).

A signal peptide spans Met1–Gly19.

This is an uncharacterized protein from Methanocaldococcus jannaschii (strain ATCC 43067 / DSM 2661 / JAL-1 / JCM 10045 / NBRC 100440) (Methanococcus jannaschii).